Here is a 749-residue protein sequence, read N- to C-terminus: Phosphate-regulating neutral endopeptidase PHEX (749 aa).

Over 1–20 (MEAETGSTMETGKGTNRGIR) the chain is Cytoplasmic. The chain crosses the membrane as a helical; Signal-anchor for type II membrane protein span at residues 21 to 37 (IALALFIGGTLVLGTLL). Residues 38 to 749 (FLVSQGLLSF…NRGADSCRLW (712 aa)) lie on the Extracellular side of the membrane. In terms of domain architecture, Peptidase M13 spans 53–749 (YCLKPECIEA…NRGADSCRLW (697 aa)). Cys-54 and Cys-59 are joined by a disulfide. Residues Asn-71, Asn-238, Asn-263, Asn-290, Asn-301, Asn-377, and Asn-484 are each glycosylated (N-linked (GlcNAc...) asparagine). Intrachain disulfides connect Cys-77–Cys-733, Cys-85–Cys-693, Cys-142–Cys-406, and Cys-617–Cys-746. A Zn(2+)-binding site is contributed by His-580. Glu-581 is an active-site residue. Zn(2+) is bound by residues His-584 and Glu-642. Catalysis depends on Asp-646, which acts as the Proton donor. The N-linked (GlcNAc...) asparagine glycan is linked to Asn-736.

Belongs to the peptidase M13 family. Interacts with MEPE; the interaction is zinc-dependent (via ASARM motif). The cofactor is Zn(2+). N-glycosylated. As to expression, expressed in bone, specifically in the osteoid and in osteocytes. Expressed in teeth, specifically in odontoblasts and ameloblasts. Expressed moderately by macrophages in the liver and has minimal expression in brown adipose tissue. Also expressed in suprabasal layers of the skin.

The protein localises to the cell membrane. Its function is as follows. Peptidase that cleaves SIBLING (small integrin-binding ligand, N-linked glycoprotein)-derived ASARM peptides, thus regulating their biological activity. Cleaves ASARM peptides between Ser and Glu or Asp residues. Regulates osteogenic cell differentiation and bone mineralization through the cleavage of the MEPE-derived ASARM peptide. Promotes dentin mineralization and renal phosphate reabsorption by cleaving DMP1- and MEPE-derived ASARM peptides. Inhibits the cleavage of MEPE by CTSB/cathepsin B thus preventing MEPE degradation. The polypeptide is Phosphate-regulating neutral endopeptidase PHEX (Phex) (Mus musculus (Mouse)).